An 827-amino-acid chain; its full sequence is Cytosolic Fe-S cluster assembly factor NAR1 (827 aa).

Position 22 (C22) interacts with [4Fe-4S] cluster. The segment at 57–77 is disordered; that stretch reads AYYESSTPPSSSLSAADSRPR. Positions 61–73 are enriched in low complexity; it reads SSTPPSSSLSAAD. The [4Fe-4S] cluster site is built by C92, C95, and C98. A disordered region spans residues 209-231; it reads RENARKRAKLSNAPADDDDRLHP. Residues C246, C307, C591, and C595 each contribute to the [4Fe-4S] cluster site. 2 disordered regions span residues 599 to 637 and 709 to 739; these read GGQIRPPTQSDVDVTRSSTTVDNHATDPEGYTKGGWAAD and DQGGANDSGSSTPTLVGSGANTPLSSSNAKS. Composition is skewed to polar residues over residues 604–621 and 713–738; these read PPTQSDVDVTRSSTTVDN and ANDSGSSTPTLVGSGANTPLSSSNAK.

The protein belongs to the NARF family.

Its function is as follows. Component of the cytosolic Fe/S protein assembly machinery. Required for maturation of extramitochondrial Fe/S proteins. May play a role in the transfer of pre-assembled Fe/S clusters to target apoproteins. In Mycosarcoma maydis (Corn smut fungus), this protein is Cytosolic Fe-S cluster assembly factor NAR1 (NAR1).